Here is a 938-residue protein sequence, read N- to C-terminus: Isoleucine--tRNA ligase (938 aa).

The short motif at 58-68 (PYANGSIHIGH) is the 'HIGH' region element. Lys-183 is subject to N6-acetyllysine. Residue Glu-561 coordinates L-isoleucyl-5'-AMP. Residues 602–606 (KMSKS) carry the 'KMSKS' region motif. Lys-605 provides a ligand contact to ATP. Cys-901, Cys-904, Cys-921, and Cys-924 together coordinate Zn(2+).

Belongs to the class-I aminoacyl-tRNA synthetase family. IleS type 1 subfamily. Monomer. Zn(2+) serves as cofactor.

It is found in the cytoplasm. It catalyses the reaction tRNA(Ile) + L-isoleucine + ATP = L-isoleucyl-tRNA(Ile) + AMP + diphosphate. Catalyzes the attachment of isoleucine to tRNA(Ile). As IleRS can inadvertently accommodate and process structurally similar amino acids such as valine, to avoid such errors it has two additional distinct tRNA(Ile)-dependent editing activities. One activity is designated as 'pretransfer' editing and involves the hydrolysis of activated Val-AMP. The other activity is designated 'posttransfer' editing and involves deacylation of mischarged Val-tRNA(Ile). In Escherichia coli O127:H6 (strain E2348/69 / EPEC), this protein is Isoleucine--tRNA ligase.